Reading from the N-terminus, the 129-residue chain is uncharacterized protein (129 aa).

The segment covering 91–114 has biased composition (basic and acidic residues); that stretch reads ASEKVGEMKEAASEKASEMKEAVS. Residues 91-129 form a disordered region; the sequence is ASEKVGEMKEAASEKASEMKEAVSEKATQAVDAVKEATK.

It belongs to the LEA type 1 family.

This is an uncharacterized protein from Haemophilus influenzae (strain ATCC 51907 / DSM 11121 / KW20 / Rd).